A 160-amino-acid polypeptide reads, in one-letter code: Ribosomal RNA large subunit methyltransferase H (160 aa).

S-adenosyl-L-methionine-binding residues include Leu76 and Gly108.

Belongs to the RNA methyltransferase RlmH family. Homodimer.

Its subcellular location is the cytoplasm. It carries out the reaction pseudouridine(1915) in 23S rRNA + S-adenosyl-L-methionine = N(3)-methylpseudouridine(1915) in 23S rRNA + S-adenosyl-L-homocysteine + H(+). Specifically methylates the pseudouridine at position 1915 (m3Psi1915) in 23S rRNA. The polypeptide is Ribosomal RNA large subunit methyltransferase H (Rhodopseudomonas palustris (strain BisB18)).